We begin with the raw amino-acid sequence, 497 residues long: Glycerol kinase (497 aa).

Threonine 12 provides a ligand contact to ADP. ATP-binding residues include threonine 12, threonine 13, and serine 14. Sn-glycerol 3-phosphate is bound at residue threonine 12. Arginine 16 contributes to the ADP binding site. Sn-glycerol 3-phosphate-binding residues include arginine 82, glutamate 83, tyrosine 134, and aspartate 243. Glycerol-binding residues include arginine 82, glutamate 83, tyrosine 134, aspartate 243, and glutamine 244. ADP contacts are provided by threonine 265 and glycine 308. ATP is bound by residues threonine 265, glycine 308, glutamine 312, and glycine 411. Residue glycine 411 coordinates ADP.

The protein belongs to the FGGY kinase family.

It catalyses the reaction glycerol + ATP = sn-glycerol 3-phosphate + ADP + H(+). The protein operates within polyol metabolism; glycerol degradation via glycerol kinase pathway; sn-glycerol 3-phosphate from glycerol: step 1/1. Inhibited by fructose 1,6-bisphosphate (FBP). In terms of biological role, key enzyme in the regulation of glycerol uptake and metabolism. Catalyzes the phosphorylation of glycerol to yield sn-glycerol 3-phosphate. The chain is Glycerol kinase from Allorhizobium ampelinum (strain ATCC BAA-846 / DSM 112012 / S4) (Agrobacterium vitis (strain S4)).